The sequence spans 388 residues: MGRARRFQWPLLLLWAAAAGPGTGQEVQTENVTVAEGGVAEITCRLHQYDGSIVVIQNPARQTLFFNGTRALKDERFQLEEFSPRRVRIRLSDARLEDEGGYFCQLYTEDTHHQIATLTVLVAPENPVVEVREQAVEGGEVELSCLVPRSRPAAVLRWYRDRKELKGVSSGQENGKVWSVASTVRFRVDRKDDGGIVICEAQNQALPSGHSKQTQYVLDVQYSPTARIHASQAVVREGDTLVLTCAVTGNPRPNQIRWNRGNESLPERAEAVGETLTLPGLVSADNGTYTCEAANKHGHARALYVLVVYDPGAVVEAQTSVPYAIVGGILALLVFLIICVLVGMVWCSVRQKGSYLTHEASGLDEQGEAREAFLNGGDGHKRKEEFFI.

The N-terminal stretch at 1–20 (MGRARRFQWPLLLLWAAAAG) is a signal peptide. The 99-residue stretch at 21-119 (PGTGQEVQTE…DTHHQIATLT (99 aa)) folds into the Ig-like V-type domain. At 25–324 (QEVQTENVTV…VEAQTSVPYA (300 aa)) the chain is on the extracellular side. 2 N-linked (GlcNAc...) asparagine glycosylation sites follow: asparagine 31 and asparagine 67. Cystine bridges form between cysteine 44–cysteine 104, cysteine 145–cysteine 199, and cysteine 245–cysteine 291. 2 consecutive Ig-like C2-type domains span residues 124–219 (PENP…YVLD) and 224–307 (PTAR…YVLV). An N-linked (GlcNAc...) asparagine glycan is attached at asparagine 286. A helical membrane pass occupies residues 325–345 (IVGGILALLVFLIICVLVGMV). Residues 346–388 (WCSVRQKGSYLTHEASGLDEQGEAREAFLNGGDGHKRKEEFFI) are Cytoplasmic-facing. At serine 361 the chain carries Phosphoserine.

It belongs to the nectin family. In terms of assembly, monomer and homodimer. N-glycosylated. In terms of tissue distribution, expressed in the brain and several organs including the kidney and liver.

It localises to the membrane. Its function is as follows. Involved in the cell-cell adhesion. Has calcium- and magnesium-independent cell-cell adhesion activity. May have tumor-suppressor activity. This chain is Cell adhesion molecule 4 (Cadm4), found in Mus musculus (Mouse).